The following is a 360-amino-acid chain: Abhydrolase domain-containing protein lid-1 (360 aa).

Residues 73-203 form the AB hydrolase-1 domain; that stretch reads AIVFIPGLGA…MSFLGGVAGY (131 aa).

The protein belongs to the peptidase S33 family. ABHD4/ABHD5 subfamily. Interacts with atgl-1.

It localises to the lipid droplet. Its function is as follows. Acts coordinately with atgl-1 within the lipolytic cascade to distribute stored energy to tissues during nutritional deprivation. In Caenorhabditis elegans, this protein is Abhydrolase domain-containing protein lid-1.